Here is a 63-residue protein sequence, read N- to C-terminus: Cytochrome c oxidase subunit 7C, mitochondrial (63 aa).

The transit peptide at 1–16 (MWGQGVRRFTTSVVRR) directs the protein to the mitochondrion. The Mitochondrial matrix segment spans residues 17–33 (SHYEEGPGKNLPFSVEN). The residue at position 25 (lysine 25) is an N6-acetyllysine; alternate. At lysine 25 the chain carries N6-succinyllysine; alternate. Residues 34-60 (KWRLLAMMTLYLGSGFAAPFFIVRHQL) form a helical membrane-spanning segment. Residues 61-63 (LKK) are Mitochondrial intermembrane-facing.

It belongs to the cytochrome c oxidase VIIc family. As to quaternary structure, component of the cytochrome c oxidase (complex IV, CIV), a multisubunit enzyme composed of 14 subunits. The complex is composed of a catalytic core of 3 subunits MT-CO1, MT-CO2 and MT-CO3, encoded in the mitochondrial DNA, and 11 supernumerary subunits COX4I, COX5A, COX5B, COX6A, COX6B, COX6C, COX7A, COX7B, COX7C, COX8 and NDUFA4, which are encoded in the nuclear genome. The complex exists as a monomer or a dimer and forms supercomplexes (SCs) in the inner mitochondrial membrane with NADH-ubiquinone oxidoreductase (complex I, CI) and ubiquinol-cytochrome c oxidoreductase (cytochrome b-c1 complex, complex III, CIII), resulting in different assemblies (supercomplex SCI(1)III(2)IV(1) and megacomplex MCI(2)III(2)IV(2)). Interacts with RAB5IF.

It is found in the mitochondrion inner membrane. Its pathway is energy metabolism; oxidative phosphorylation. Its function is as follows. Component of the cytochrome c oxidase, the last enzyme in the mitochondrial electron transport chain which drives oxidative phosphorylation. The respiratory chain contains 3 multisubunit complexes succinate dehydrogenase (complex II, CII), ubiquinol-cytochrome c oxidoreductase (cytochrome b-c1 complex, complex III, CIII) and cytochrome c oxidase (complex IV, CIV), that cooperate to transfer electrons derived from NADH and succinate to molecular oxygen, creating an electrochemical gradient over the inner membrane that drives transmembrane transport and the ATP synthase. Cytochrome c oxidase is the component of the respiratory chain that catalyzes the reduction of oxygen to water. Electrons originating from reduced cytochrome c in the intermembrane space (IMS) are transferred via the dinuclear copper A center (CU(A)) of subunit 2 and heme A of subunit 1 to the active site in subunit 1, a binuclear center (BNC) formed by heme A3 and copper B (CU(B)). The BNC reduces molecular oxygen to 2 water molecules using 4 electrons from cytochrome c in the IMS and 4 protons from the mitochondrial matrix. This chain is Cytochrome c oxidase subunit 7C, mitochondrial (COX7C), found in Carlito syrichta (Philippine tarsier).